Consider the following 1012-residue polypeptide: Structural polyprotein (1012 aa).

D30 lines the a divalent metal cation pocket. The region spanning 513 to 755 (ADKGYEVVAN…AGRQYHLAMA (243 aa)) is the Peptidase S50 domain. S652 acts as the Nucleophile in catalysis. K692 is an active-site residue. Residues 969–1012 (AMELKHRNPRRAPPKPKPKPNAPTQRPPGRLGRWIRTVSDEDLE) form a disordered region. The segment covering 975 to 986 (RNPRRAPPKPKP) has biased composition (basic residues). The segment at 1003 to 1012 (IRTVSDEDLE) is interaction with VP1 protein.

As to quaternary structure, homotrimer. A central divalent metal stabilizes the VP2 trimer. Interacts with host ITGA4/ITGB1. Homodimer. Interacts (via C-terminus) with VP1 in the cytoplasm. Interacts with VP2. In terms of processing, specific enzymatic cleavages yield mature proteins. The capsid assembly seems to be regulated by polyprotein processing. The protease VP4 cleaves itself off the polyprotein, thus releasing pre-VP2 and VP3 within the infected cell. During capsid assembly, the C-terminus of pre-VP2 is further processed by VP4, giving rise to VP2, the external capsid protein and three small peptides that all stay closely associated with the capsid.

It is found in the virion. The protein resides in the host cytoplasm. Its function is as follows. Capsid protein VP2 self assembles to form an icosahedral capsid with a T=13 symmetry, about 70 nm in diameter, and consisting of 260 VP2 trimers. The capsid encapsulates the genomic dsRNA. VP2 is also involved in attachment and entry into the host cell by interacting with host ITGA4/ITGB1. In terms of biological role, the precursor of VP2 plays an important role in capsid assembly. First, pre-VP2 and VP2 oligomers assemble to form a procapsid. Then, the pre-VP2 intermediates may be processed into VP2 proteins by proteolytic cleavage mediated by VP4 to obtain the mature virion. The final capsid is composed of pentamers and hexamers but VP2 has a natural tendency to assemble into all-pentameric structures. Therefore pre-VP2 may be required to allow formation of the hexameric structures. Protease VP4 is a serine protease that cleaves the polyprotein into its final products. Pre-VP2 is first partially cleaved, and may be completely processed by VP4 upon capsid maturation. Functionally, capsid protein VP3 plays a key role in virion assembly by providing a scaffold for the capsid made of VP2. May self-assemble to form a T=4-like icosahedral inner-capsid composed of at least 180 trimers. Plays a role in genomic RNA packaging by recruiting VP1 into the capsid and interacting with the dsRNA genome segments to form a ribonucleoprotein complex. Additionally, the interaction of the VP3 C-terminal tail with VP1 removes the inherent structural blockade of the polymerase active site. Thus, VP3 can also function as a transcriptional activator. Its function is as follows. Structural peptide 1 is a small peptide derived from pre-VP2 C-terminus. It destabilizes and perforates cell membranes, suggesting a role during entry. In terms of biological role, structural peptide 2 is a small peptide derived from pVP2 C-terminus. It is not essential for the virus viability, but viral growth is affected when missing. Structural peptide 3 is a small peptide derived from pVP2 C-terminus. It is not essential for the virus viability, but viral growth is affected when missing. Functionally, structural peptide 4 is a small peptide derived from pVP2 C-terminus. It is essential for the virus viability. This chain is Structural polyprotein, found in Avian infectious bursal disease virus (strain STC) (IBDV).